The sequence spans 187 residues: Interferon alpha-3 (187 aa).

An N-terminal signal peptide occupies residues 1–23 (MALPCSFSVALVLLSCHSLCCLA). 2 disulfide bridges follow: Cys-24-Cys-122 and Cys-52-Cys-160. 2 N-linked (GlcNAc...) asparagine glycosylation sites follow: Asn-94 and Asn-101.

Belongs to the alpha/beta interferon family.

It is found in the secreted. In terms of biological role, produced by macrophages, IFN-alpha have antiviral activities. Interferon stimulates the production of two enzymes: a protein kinase and an oligoadenylate synthetase. The protein is Interferon alpha-3 of Canis lupus familiaris (Dog).